The primary structure comprises 348 residues: 3'-dehydrocarminate deglycosidase alpha subunit (348 aa).

A Mg(2+)-binding site is contributed by glutamate 145. Histidine 147 acts as the Proton acceptor in catalysis. 3 residues coordinate Mg(2+): aspartate 177, histidine 275, and glutamate 311.

It belongs to the C-glycoside deglycosidase alpha subunit family. In terms of assembly, heterodimer composed of an alpha subunit (CarB) and a beta subunit (CarC). Mg(2+) is required as a cofactor.

It catalyses the reaction 3'-dehydrocarminate + H(+) = kermesate + 1,5-anhydro-D-erythro-hex-1-en-3-ulose. With respect to regulation, activity is strongly reduced in the presence of chelating agents. In terms of biological role, carbon-carbon bond-cleaving enzyme which participates in a carminate degradation pathway. Cleaves the C-C bond in 3'-dehydrocarminate to form kermesate. Also shows weak activity with other C-glycosides, such as 3''-dehydropuerarin (3''-oxo-puerarin), 3''-dehydroisoorientin (3''-oxo-homoorientin) and 3'-dehydromangiferin (3'-oxo-mangiferin). This Microbacterium sp protein is 3'-dehydrocarminate deglycosidase alpha subunit.